A 257-amino-acid chain; its full sequence is 3-methyl-2-oxobutanoate hydroxymethyltransferase (257 aa).

The Mg(2+) site is built by aspartate 44 and aspartate 83. 3-methyl-2-oxobutanoate contacts are provided by residues 44 to 45, aspartate 83, and lysine 113; that span reads DS. Mg(2+) is bound at residue glutamate 115. Glutamate 182 acts as the Proton acceptor in catalysis.

The protein belongs to the PanB family. As to quaternary structure, homodecamer; pentamer of dimers. It depends on Mg(2+) as a cofactor.

The protein resides in the cytoplasm. The catalysed reaction is 3-methyl-2-oxobutanoate + (6R)-5,10-methylene-5,6,7,8-tetrahydrofolate + H2O = 2-dehydropantoate + (6S)-5,6,7,8-tetrahydrofolate. It participates in cofactor biosynthesis; (R)-pantothenate biosynthesis; (R)-pantoate from 3-methyl-2-oxobutanoate: step 1/2. Functionally, catalyzes the reversible reaction in which hydroxymethyl group from 5,10-methylenetetrahydrofolate is transferred onto alpha-ketoisovalerate to form ketopantoate. The chain is 3-methyl-2-oxobutanoate hydroxymethyltransferase from Rippkaea orientalis (strain PCC 8801 / RF-1) (Cyanothece sp. (strain PCC 8801)).